Reading from the N-terminus, the 317-residue chain is Ribosomal protein L11 methyltransferase (317 aa).

S-adenosyl-L-methionine-binding residues include threonine 169, glycine 190, aspartate 211, and asparagine 256.

It belongs to the methyltransferase superfamily. PrmA family.

The protein localises to the cytoplasm. The catalysed reaction is L-lysyl-[protein] + 3 S-adenosyl-L-methionine = N(6),N(6),N(6)-trimethyl-L-lysyl-[protein] + 3 S-adenosyl-L-homocysteine + 3 H(+). Methylates ribosomal protein L11. The polypeptide is Ribosomal protein L11 methyltransferase (Helicobacter hepaticus (strain ATCC 51449 / 3B1)).